We begin with the raw amino-acid sequence, 508 residues long: Small ribosomal subunit protein mS47 (508 aa).

Belongs to the enoyl-CoA hydratase/isomerase family. Mitochondrion-specific ribosomal protein mS47 subfamily. In terms of assembly, component of the mitochondrial small ribosomal subunit (mt-SSU). Mature N.crassa 74S mitochondrial ribosomes consist of a small (37S) and a large (54S) subunit. The 37S small subunit contains a 16S ribosomal RNA (16S mt-rRNA) and 32 different proteins. The 54S large subunit contains a 23S rRNA (23S mt-rRNA) and 42 different proteins. mS47 forms a protuberance of the N.crassa mitoribosome and retains a solvent-exposed cavity liekly capable of accommodating a substrate, in accordance with it being an active enzyme as well as an integral constituent of the mitoribosome.

It is found in the mitochondrion. The enzyme catalyses 3-hydroxy-2-methylpropanoyl-CoA + H2O = 3-hydroxy-2-methylpropanoate + CoA + H(+). Component of the mitochondrial ribosome (mitoribosome), a dedicated translation machinery responsible for the synthesis of mitochondrial genome-encoded proteins, including at least some of the essential transmembrane subunits of the mitochondrial respiratory chain. The mitoribosomes are attached to the mitochondrial inner membrane and translation products are cotranslationally integrated into the membrane. mS47 has enzymatic activity in vitro, and is able to catalyze the specific hydrolysis of 3-hydroxyisobutyryl-CoA (HIBYL-CoA). However, because the turnover rate of mS47 is only a fraction of that of the homologous mammalian enzyme, the physiological function of this activity remains unclear. This Neurospora crassa (strain ATCC 24698 / 74-OR23-1A / CBS 708.71 / DSM 1257 / FGSC 987) protein is Small ribosomal subunit protein mS47 (ehd3).